A 196-amino-acid chain; its full sequence is Gastrula zinc finger protein XlCGF64.1 (196 aa).

7 consecutive C2H2-type zinc fingers follow at residues 6–28 (YECPECGKTFKYKNSLTIHQRGH), 34–56 (FMCTQCGKCFRQKKALRRHQFIH), 62–84 (YVCTECEKRFLEKSQLILHQRGH), 90–112 (FTCTECGESFRHKQVLMRHQFIH), 118–140 (YECTQCGEGFLLKSKLIHHQRGH), 146–168 (FMCTECGKGFRQKQVLIEHQFIH), and 174–196 (LMCTDCGKHFRQKHVLRLHKLSH).

The protein belongs to the krueppel C2H2-type zinc-finger protein family.

The protein resides in the nucleus. Its function is as follows. May be involved in transcriptional regulation. In Xenopus laevis (African clawed frog), this protein is Gastrula zinc finger protein XlCGF64.1.